The following is a 7524-amino-acid chain: MKLILLYLAVVLCFVGKGAARSPTTTRTPTPSTSEKASHVPEATPTYSEANEVAGEATMWGKDKYKALNGHIFSFESECTFTFCRDCAEPGGDFNIEIKKHKNGDIEEIKALIDDVEILVVRNSISVNEERVKVPFSNKMIHIKKQGNHYSLKTRRRILSLKWSKDKLSLILYSHYTTCGLCGNFDSVPGDDVNEHIASSKISNDCPSPLSRSNEVCEDGVQYCDKIIETYFEKCSKVSPLSREYKNVCADEYCRKGGGKQTTCDTYSELARLCAYDGPGDYEHWRDDSAVVCAKEQCPGKHIYKECGPSNPPTCSNVAPFQDSECVSGCTCPEGYLLDDIGEKGKCVLKEKCPCESNGKVYKPGKVREGPCGSRCTCQEAKWSCTEARCPGICKVEGSSFTTFDDNKFSHPGDCHFLAVHNDEISISVEIHPCGNGQTGSCLTSVMVLQNSSSSSNRYVFNRDGTVTKDGVIIKGYYYSDDVQIFNSSSSYMQAEILSHIKLQIQLAPRMQLYVSLAPNTSTDTVGLCGSFNNKAEDDFMSSQNILESTAQAFANSWEMMPCSEGSPSSCVSIETEKFAESNCEILLSSSGPFAACHQTVNPKFYHEECKKYTCSCENGQDCLCTVLGNYVKACAEKEIYLVGWRDGLCEVSCPSGLVFNYKVKTCNSSCRSLSARDRSCDIEDIPVDGCTCPDGMYQNNEGNCVQKSECDCYVNDEIVQPGKSILIDDNKCVCQDGVLHCQTPLDLTLQNCSRGAEYIDCKDPKAQRRTERTCATRNIPDFEGDLPCKRGCYCPVGMVRNSKGICIHPDDCPCSFGDREYEQGSVTSVGCNECTCIKGSWNCTQNECQSTCHVYGEGHFRTFDGESYSFDGLCQYTFLEDYCGQENGTFRILIESVPCCENGLTCSRKVIVTFQDQNIILQDGKVTAVQTAESTDCRERSANLYSIHTVGLYLIVKLLNGIILIWDKYTKVSVILDPSWQNKVCGLCGNNNGDLKDDFTTRHSSVAAGALEFANSWKTSQECSDTVTQSFPCDSNPYCKAWAEKRCEILRDDTFRDCHSKVDPTTYYDACIEEACSCDMEGKYLGFCTAVAMYAEACNAAGVCVSWRKPNLCPVYCDYYNAPGECSWHYEPCGTVTAKTCKDQVIGQKFSSLLEGCYAKCPENAPYLDENTMKCVQLSECSCFYNDVIPAGGAVVDDCGRTCSCSAGELECSETPPNSTTTTTATTAAVSTATTTSVLSTSAAATRASSSTSGSVETSVPATTSTSKAQAHITTASSTETSALNSTAVYPKATTREGLLSSSGPGAFVAERPDNTPRPAVSTTSAGSTSARAATTSPGGSSGSSAPASSTSGRAATTTSTSAATTTTTTTATTVGSAGSSAPTASSTAAGSGLREAANATSAPASTSGQPGASTGSSGTSSSVSSTAAATTAGTTTAASNETSAPASTAGPTSSATTAAPASSSASSATTPAETAGSTTGPAVSTTSAGSTSARAATTSPGGSSGSSAPASSTSGRAATTTSTATTTTTTTTTATTVGSAGSSAPTASSTAAGSGLREAANATSAPASTSGQPGASTGSSGTSSSVSSTAAATTAGTTTAASNETSAPASTAGPTSSATTAAPASSSASSATTPAETAGSTTGPAVSTTSAGSTSARAATTSPGGSSGSSAPASSTSGRAATTTSTATTTTTTTTTATTVGSAGSSAPTASSTAAGSGLREAANATSAPASTSGQPGASTGSSGTSSSVSSTAAATTAGTTTAASNETSAPASTAGPTSSATTAAPASSSASSATTPAETAGSTTGPAVSTTSAGSTSARAATTSPGGSSGSSAPASSTSGRAATTTSTATTTTTTTTTATTVGSAGSSAPTASSTAAGSGLREAANATSAPASTSGQPGASTGSSGTSSSVSSTAAATTAGTTTAASNETSAPASTAGPTSSATTAAPASSSASSATTPAETAGSTTGPAVSTTSAGSTSARAATTSPGGSSGSSAPASSTSGRAATTTSTATTTTTTTTTATTVGSAGSSAPTASSTAAGSGLREAANATSAPASTSGQPGASTGSSGTSSSVSSTAAATTAGTTTAASNETSAPASTAGPTSSATTAAPASSSASSATTPAETAGSTTGPAVSTTSAGSTSARAATTSPGGSSGSSAPASSTSGRAATTTSTATTTTTTTTTATTVGSAGSSAPTASSTAAGSGLREAANATSAPASTSGQPGASTGSSGTSSSVSSTAAATTAGTTTAASNETSAPASTAGPTSSATTAAPASSSASSATTPAETAGSTTGPAVSTTSAGSTSARAATTSPGGSSGSSAPASSTSGRAATTTSTATTTTTTTTTATTVGSAGSSAPTASSTAAGSGLREAANATSAPASTSGQPGASTGSSGTSSSVSSTAAATTAGTTTAASNETSAPASTAGPTSSATTAAPASSSASSATTPAETAGSTTGPAVSTTSAGSTSARAATTSPGGSSGSSAPASSTSGRAATTTSTATTTTTTTTTATTVGSAGSSAPTASSTAAGSGLREAANATSAPASTSGQPGASTGSSGTSSSVSSTAAATTAGTTTAASNETSAPASTAGPTSSATTAAPASSSASSATTPAETAGSTTGPAVSTTSAGSTSARAATTSPGGSSGSSAPASSTSGRAATTTSTATTTTTTTTTATTVGSAGSSAPTASSTAAGSGLREAANATSAPASTSGQPGASTGSSGTSSSVSSTAAATTAGTTTAASNETSAPASTAGPTSSATTAAPASSSASSATTPAETAGSTTGPAVSTTSAGSTSARAATTSPGGSSGSSAPASSTSGRAATTTSTATTTTTTTTTATTVGSAGSSAPTASSTAAGSGLREAANATSAPASTSGQPGASTGSSGTSSSVSSTAAATTAGTTTAASNETSAPASTAGPTSSATTAAPASSSASSATTPAETAGSTTGPAVSTTSAGSTSARAATTSPGGSSGSSAPASSTSGRAATTTSTATTTTTTTTTATTVGSAGSSAPTASSTAAGSGLREAANATSAPASTSGQPGASTGSSGTSSSVSSTAAATTAGTTTAASNETSAPASTAGPTSSATTAAPASSSASSATTPAETAGSTTGPAVSTTSAGSTSARAATTSPGGSSGSSAPASSTSGRAATTTSTATTTTTTTTTATTVGSAGSSAPTASSTAAGSGLREAANATSAPASTSGQPGASTGSSGTSSSVSSTAAATTAGTTTAASNETSAPASTAGPTSSATTAAPASSSASSATTPAETAGSTTGPAVSTTSAGSTSARAATTSPGGSSGSSAPASSTSGRAATTTSTATTTTTTTTTATTVGSAGSSAPTASSTAAGSGLREAANATSAPASTSGQPGASTGSSGTSSSVSSTAAATTAGTTTAASNETSAPASTAGPTSSATTAAPASSSASSATTPAETAGSTTGPAVSTTSAGSTSARAATTSPGGSSGSSAPASSTSGRAATTTSTATTTTTTTTTATTVGSAGSSAPTASSTAAGSGLREAANATSAPASTSGQPGASTGSSGTSSSVSSTAAATTAGTTTAASNETSAPASTAGPTSSATTAAPASSSASSATTPAETAGSTTGPAVSTTSAGSTSARAATTSPGGSSGSSAPASSTSGRAATTTSTATTTTTTTTTATTVGSAGSSAPTASSTAAGSGLREAANATSAPASTSGQPGASTGSSGTSSSVSSTAAATTAGTTTAASNETSAPASTAGPTSSATTAAPASSSASSATTPAETAGSTTGPAVSTTSAGSTSARAATTSPGGSSGSSAPASSTSGRAATTTSTATTTTTTTTTATTVGSAGSSAPTASSTAAGSGLREAANATSAPASTSGQPGASTGSSGTSSSVSSTAAATTAGTTTAASNETSAPASTAGPTSSATTAAPASSSASSATTPAETAGSTTGPAVSTTSAGSTSARAATTSPGGSSGSSAPASSTSGRAATTTSTATTTTTTTTTATTVGSAGSSAPTASSTAAGSGLREAANATSAPASTSGQPGASTGSSGTSSSVSSTAAATTAGTTTAASNETSAPASTAGPTSSATTAAPASSSASSATTPAETAGSTTGPAVSTTSAGSTSARAATTSPGGSSGSSAPASSTSGRAATTTSTATTTTTTTTTATTVGSAGSSAPTASSTAAGSGLREAANATSAPASTSGQPGASTGSSGTSSSVSSTAAATTAGTTTAASNETSAPASTAGPTSSATTAAPASSSASSATTPAETAGSTTGPAVSTTSAGSTSARAATTSPGGSSGSSAPASSTSGRAATTTSTATTTTTTTTTATTVGSAGSSAPTASSTAAGSGLREAANATSAPASTSGQPGASTGSSGTSSSVSSTAAATTAGTTTAASNETSAPASTAGPTSSATTAAPASSSASSATTPAETAGSTTGPAVSTTSAGSTSARAATTSPGGSSGSSAPASSTSGRAATTTSTATTTTTTTTTATTVGSAGSSAPTASSTAAGSGLREAANATSAPASTSGQPGASTGSSGTSSSVSSTAAATTAGTTTAASNETSAPASTAGPTSSATTAAPASSSASSATTPAETAGSTTGPAVSTTSAGSTSARAATTSPGGSSGSSAPASSTSGRAATTTSTATTTTTTTTTATTVGSAGSSAPTASSTAAGSGLREAANATSAPASTSGQPGASTGSSGTSSSVSSTAAATTAGTTTAASNETSAPASTAGPTSSATTAAPASSSASSATTPAETAGSTTGPAVSTTSAGSTSARAATTSPGGSSGSSAPASSTSGRAATTTSTATTTTTTTTTATTVGSAGSSAPTASSTAAGSGLREAANATSAPASTSGQPGASTGSSGTSSSVSSTAAATTAGTTTAASNETSAPASTAGPTSSATTAAPASSSASSATTPAETAGSTTGPAVSTTSAGSTSARAATTSPGGSSGSSAPASSTSGRAATTTSTATTTTTTTTTATTVGSAGSSAPTASSTAAGSGLREAANATSAPASTSGQPGASTGSSGTSSSVSSTAAATTAGTTTAASNETSAPASTAGPTSSATTAAPASSSASSATTPAETAGSTTGPAVSTTSAGSTSARAATTSPGGSSGSSAPASSTSGRAATTTSTATTTTTTTTTATTVGSAGSSAPTASSTAAGSGLREAANATSAPASTSGQPGASTGSSGTSSSVSSTAAATTAGTTTAASNETSAPASTAGPTSSATTAAPASSSASSATTPAETAGSTTGPAVSTTSAGSTSARAATTSPGGSSGSSAPASSTSGRAATTTSTATTTTTTTTTATTVGSAGSSAPTASSTAAGSGLREAANATSAPASTSGQPGASTGSSGTSSSVSSTAAATTAGTTTAASNETSAPASTAGPTSSATTAAPASSSASSATTPAETAGSTTGPAVSTTSAGSTSARAATTSPGGSSGSSAPASSTSGRAATTTSTATTTTTTTTTATTVGSAGSSAPTASSTAAGSGLREAANATSAPASTSGQPGASTGSSGTSSSVSSTAAATTAGTTTAASNETSAPASTAGPTSSATTAAPASSSASSATTPAETAGSTTGPAVSTTSAGSTSARAATTSPGGSSGSSAPASSTSGRAATTTSTATTTTTTTTTATTVGSAGSSAPTASSTAAGSGLREAANATSAPASTSGQPGASTGSSGTSSSVSSTAAATTAGTTTAASNETSAPASTAGPTSSATTAAPASSSASSATTPAETAGSTTGPAVSTTSAGSTSARAATTSPGGSSGSSAPASSTSGRAATTTSTATTTTTTTTTATTVGSAGSSAPTASSTAAGSGLREAANATSAPASTSGQPGASTGSSGTSSSVSSTAAATTAGTTTAASNETSAPASTAGPTSSATTAAPASSSASSATTPAETAGSTTGPAVSTTSAGSTSARAATTSPGGSSGSSAPASSTSGRAATTTSTATTTTTTTTTATTVGSAGSSAPTASSTAAGSGLREAANATSAPASTSGQPGASTGSSGTSSSVSSTAAATTAGTTTAASNETSAPASTAGPTSSATTAAPASSSASSATTPAETAGSTTGPAVSTTSAGSTSARAATTSPGGSSGSSAPASSTSGRAATTTSTATTTTTTTTTATTVGSAGSSAPTASSTAAGSGLREAANATSAPASTSGQPGASTGSSGTSSSVSSTAAATTAGTTTAASNETSAPASTAGPTSSATTAAPASSSASSATTPAETAGSTTGPAVSTTSAGSTSARAATTSPGGSSGSSAPASSTSGRAATTTSTATTTTTTTTTATTVGSAGSSAPTASSTAAGSGLREAANATSAPASTSGQPGASTGSSGTSSSVSSTAAATTAGTTTAASNETSAPASTAGPTSSATTAAPASSSASSATTPAETAGSTTGPAVSTTSAGSTSARAATTSPGGSSGSSAPASSTSGRAATTTSTATTTTTTTTTATTVGSAGSSAPTASSTAAGSGLREAANATSAPASTSGQPGASTGSSGTSSSVSSTAAATTAGTTTAASNETSAPASTAGPTSSATTAAPASSSASSATTPAETAGSTTGPAVSTTSAGSTSARAATTSPGGSSGSSAPASSTSGRAATTTSTATTTTTTTTTATTVGSAGSSAPTASSTAAGSGLREAANATSAPASTSGQPGASTGSSGTSSSVSSTAAATTAGTTTAASNETSAPASTAGPTSSATTAAPASSSASSATTPAETAGSTTGPAVSTTSAGSTSARAATTSPGGSSGSSAPASSTSGRAATTTSTATTTTTTTTTATTVGSAGSSAPTASSTAAGSGLREAANATSAPASTSGQPGASTGSSGTSSSVSSTAAATTAGTTTAASNETSAPASTAGPTSSATTAAPASSSASSATTPAETAGSTTGPAVSTTSAGSTSARAATTSPGGSSGSSAPASSTSGRAATTTSTATTTTTTTTTATTVGSAGSSAPTASSTAAGSGLREAANATSAPASTSGQPGASTGSSGTSSSVSSTAAATTAGTTTAASNETSAPASTAGPTSSATTAAPASSSASSATTPAETAGSTTGPAVSTTSAGSTSARAATTSPGGSSGSSAPASSTSGRAATTTSTATTTTTTTTTATTVGSAGSSAPTASSTAAGSGLREAANATSAPVSTSGQPGASTGSSGTSSSVSSTAAATTAGTTTAASNETSAPASTAGPTSSATTAAPASSSASSATTPAETAGSTTGPAVSTTSAGSTSARAATTSPGGSSGSSSLAISTMSVSSSSFISPSGHPVPSTASVAFLSSPSVIKTGGTTGTTAKSNETTGRTTSMPASTSVAPGVTTSPNISQPECPDSLPPTPVCHGPLGEEKSPGDVWISNCHQCTCTEKQAVDCKPKECPSPPTCKDGEKLMKFKSNDSCCEIGHCEPRTCLFNNTDYAIGSSFDDPSNPCLSYTCNPTGLVAVVQDCPKQTWCAEEERIYDSNKCCYKCKNDCRTTPVNVTVKYNGCRKRVEMARCIGECKRSVKYNYETFQLENSCSCCREENYEFRDIALECSDGSTIPYRYRHTTTCSCRDQCEQSKAS.

The N-terminal stretch at 1-20 is a signal peptide; that stretch reads MKLILLYLAVVLCFVGKGAA. Residues 20-47 form a disordered region; sequence ARSPTTTRTPTPSTSEKASHVPEATPTY. The segment covering 21-34 has biased composition (low complexity); that stretch reads RSPTTTRTPTPSTS. Residues 55–225 form the VWFD 1 domain; sequence GEATMWGKDK…VCEDGVQYCD (171 aa). Cys79 and Cys224 are disulfide-bonded. The 56-residue stretch at 298–353 folds into the TIL domain; the sequence is CPGKHIYKECGPSNPPTCSNVAPFQDSECVSGCTCPEGYLLDDIGEKGKCVLKEKC. VWFD domains follow at residues 392 to 568 and 851 to 1025; these read GICK…EGSP and STCH…QECS. 6 disulfides stabilise this stretch: Cys394-Cys529, Cys434-Cys442, Cys853-Cys989, Cys875-Cys1024, Cys884-Cys986, and Cys900-Cys907. The span at 1244 to 1261 shows a compositional bias: low complexity; sequence AAATRASSSTSGSVETSV. 2 disordered regions span residues 1244-7217 and 7249-7297; these read AAAT…SSLA and SVIK…CPDS. Positions 1262–1289 are enriched in polar residues; the sequence is PATTSTSKAQAHITTASSTETSALNSTA. Composition is skewed to low complexity over residues 1320–7099 and 7112–7217; these read PAVS…AGSG and STSG…SSLA. A run of 36 repeats spans residues 1321 to 1483, 1484 to 1646, 1647 to 1809, 1810 to 1972, 1973 to 2135, 2136 to 2298, 2299 to 2461, 2462 to 2624, 2625 to 2787, 2788 to 2950, 2951 to 3113, 3114 to 3276, 3277 to 3439, 3440 to 3602, 3603 to 3765, 3766 to 3928, 3929 to 4091, 4092 to 4254, 4255 to 4417, 4418 to 4580, 4581 to 4743, 4744 to 4906, 4907 to 5069, 5070 to 5232, 5233 to 5395, 5396 to 5558, 5559 to 5721, 5722 to 5884, 5885 to 6047, 6048 to 6210, 6211 to 6373, 6374 to 6536, 6537 to 6699, 6700 to 6862, 6863 to 7025, and 7026 to 7188. The approximate repeats stretch occupies residues 1321–7188; sequence AVSTTSAGST…AETAGSTTGP (5868 aa). Polar residues predominate over residues 7261 to 7291; it reads AKSNETTGRTTSMPASTSVAPGVTTSPNISQ. VWFC domains lie at 7302–7368 and 7370–7432; these read PVCH…GHCE and RTCL…YKCK. Disulfide bonds link Cys7435-Cys7482, Cys7449-Cys7496, Cys7458-Cys7512, and Cys7462-Cys7514. The CTCK domain maps to 7435 to 7519; sequence CRTTPVNVTV…TTCSCRDQCE (85 aa).

In terms of tissue distribution, specifically expressed in sublingual salivary glands. Expressed by mucous cells of the submandibular gland and submucosal gland of the trachea. Expression is altered in sld (sublingual gland differentiation arrest) mutants.

It localises to the secreted. Functionally, may function in ocular mucus homeostasis. This Mus musculus (Mouse) protein is Mucin-19 (Muc19).